A 496-amino-acid polypeptide reads, in one-letter code: Cytochrome P450 monooxygenase cle4 (496 aa).

A helical membrane pass occupies residues 12–34 (FFTSPFPLTVGILSISLSGVLWY). Cys-435 contributes to the heme binding site.

Belongs to the cytochrome P450 family. Requires heme as cofactor.

Its subcellular location is the membrane. It functions in the pathway secondary metabolite biosynthesis; terpenoid biosynthesis. Its function is as follows. Cytochrome P450 monooxygenase; part of the cluster A that mediates the biosynthesis of chevalone E and its oxidized derivatives that possess a unique five-membered lactone ring and can synergistically enhance the cytotoxicity of doxorubicin (DOX) in breast cancer cells. Within the pathway, cle4 is involved in hydroxylation of the chavalone E scaffold at positions C-11 and C-12 and contributes with cle2 to the production of seven oxidation derivatives. The molecular scaffold is commonly biosynthesized by a series of enzymes including the non-reducing polyketide synthase (NR-PKS) cle1 that produces the alpha-pyrone triacetic acid lactone (TAL); The membrane-bound prenyltransferase cle5 that accepts TAL as its substrate to perform a C-3 geranylgeranylation reaction, in which the pathway-dedicated GGPS cle6 is required to provide GGPP, the other substrate of cle5; the FAD-dependent monooxygenase Cle3 that forms an (S)-epoxide ring at the terminal olefin of the geranylgeranyl group; and the terpene cyclase Cle7 that catalyzes the cyclization of the prenyl group that yields the pentacyclic pathway intermediate chevalone E. Chevalone E can derivatize into seven new oxidized analogs by the cytochrome P450 monooxygenases cle2 (acting at C-20) and cle4 (acting at C-11 and C-12). The chain is Cytochrome P450 monooxygenase cle4 from Aspergillus versicolor.